A 178-amino-acid polypeptide reads, in one-letter code: MLVSGIDDGYFPLKYKGRNGRTVMLSVVFKDYDIIDIDFDFIIVDGDDGTSVLNSLQTGDVCILDGLTFGGFNFVNPSELKSKYIIFYSSKPNIFKITRALDRHFNDERRDIIINVISNLTRVSTLRGDVYIYTNLDLKMAKNIIEEYQVFDRIPLPLKIAHEISSSLSTFLLSKKII.

This sequence belongs to the UPF0215 family.

The chain is UPF0215 protein STK_03040 from Sulfurisphaera tokodaii (strain DSM 16993 / JCM 10545 / NBRC 100140 / 7) (Sulfolobus tokodaii).